Reading from the N-terminus, the 623-residue chain is Chaperone protein DnaK (623 aa).

T197 is modified (phosphothreonine; by autocatalysis). The interval 600–623 (KKDENAGANGGNKKDDDVIDAEVE) is disordered.

The protein belongs to the heat shock protein 70 family.

In terms of biological role, acts as a chaperone. The sequence is that of Chaperone protein DnaK from Campylobacter concisus (strain 13826).